A 155-amino-acid chain; its full sequence is Histone H2B.5 (155 aa).

Composition is skewed to basic and acidic residues over residues 1–28 (MAPK…EKAP) and 36–54 (EKRL…GKKD). The disordered stretch occupies residues 1-63 (MAPKAEKKPA…DRAGRKKAKK (63 aa)). Residues Lys7 and Lys37 each carry the N6-acetyllysine modification. Lys151 is covalently cross-linked (Glycyl lysine isopeptide (Lys-Gly) (interchain with G-Cter in ubiquitin)).

This sequence belongs to the histone H2B family. As to quaternary structure, the nucleosome is a histone octamer containing two molecules each of H2A, H2B, H3 and H4 assembled in one H3-H4 heterotetramer and two H2A-H2B heterodimers. The octamer wraps approximately 147 bp of DNA. Post-translationally, can be acetylated to form H2BK6ac and H2BK33ac. Monoubiquitinated by BRE1 to form H2BK143ub1 and deubiquitinated by UBP26. Required for heterochromatic histone H3 di- and trimethylation at H3K4me. May give a specific tag for epigenetic transcriptional activation.

The protein resides in the nucleus. It localises to the chromosome. Core component of nucleosome. Nucleosomes wrap and compact DNA into chromatin, limiting DNA accessibility to the cellular machineries which require DNA as a template. Histones thereby play a central role in transcription regulation, DNA repair, DNA replication and chromosomal stability. DNA accessibility is regulated via a complex set of post-translational modifications of histones, also called histone code, and nucleosome remodeling. The sequence is that of Histone H2B.5 (H2B.5) from Oryza sativa subsp. japonica (Rice).